Reading from the N-terminus, the 410-residue chain is Serine hydroxymethyltransferase (410 aa).

(6S)-5,6,7,8-tetrahydrofolate-binding positions include Leu-119 and 123–125; that span reads GHL. Lys-228 is modified (N6-(pyridoxal phosphate)lysine). 351–353 serves as a coordination point for (6S)-5,6,7,8-tetrahydrofolate; it reads SPF.

Belongs to the SHMT family. Homodimer. Pyridoxal 5'-phosphate serves as cofactor.

Its subcellular location is the cytoplasm. It catalyses the reaction (6R)-5,10-methylene-5,6,7,8-tetrahydrofolate + glycine + H2O = (6S)-5,6,7,8-tetrahydrofolate + L-serine. It participates in one-carbon metabolism; tetrahydrofolate interconversion. The protein operates within amino-acid biosynthesis; glycine biosynthesis; glycine from L-serine: step 1/1. In terms of biological role, catalyzes the reversible interconversion of serine and glycine with tetrahydrofolate (THF) serving as the one-carbon carrier. This reaction serves as the major source of one-carbon groups required for the biosynthesis of purines, thymidylate, methionine, and other important biomolecules. Also exhibits THF-independent aldolase activity toward beta-hydroxyamino acids, producing glycine and aldehydes, via a retro-aldol mechanism. This chain is Serine hydroxymethyltransferase, found in Alkaliphilus metalliredigens (strain QYMF).